The primary structure comprises 475 residues: Ribulose bisphosphate carboxylase large chain (475 aa).

Positions 1–2 (MS) are excised as a propeptide. Proline 3 carries the post-translational modification N-acetylproline. At lysine 14 the chain carries N6,N6,N6-trimethyllysine. Positions 123 and 173 each coordinate substrate. The Proton acceptor role is filled by lysine 175. Lysine 177 is a binding site for substrate. Mg(2+) is bound by residues lysine 201, aspartate 203, and glutamate 204. Lysine 201 is subject to N6-carboxylysine. Histidine 294 functions as the Proton acceptor in the catalytic mechanism. Substrate contacts are provided by arginine 295, histidine 327, and serine 379.

It belongs to the RuBisCO large chain family. Type I subfamily. As to quaternary structure, heterohexadecamer of 8 large chains and 8 small chains; disulfide-linked. The disulfide link is formed within the large subunit homodimers. Requires Mg(2+) as cofactor. The disulfide bond which can form in the large chain dimeric partners within the hexadecamer appears to be associated with oxidative stress and protein turnover.

The protein resides in the plastid. Its subcellular location is the chloroplast. The enzyme catalyses 2 (2R)-3-phosphoglycerate + 2 H(+) = D-ribulose 1,5-bisphosphate + CO2 + H2O. The catalysed reaction is D-ribulose 1,5-bisphosphate + O2 = 2-phosphoglycolate + (2R)-3-phosphoglycerate + 2 H(+). RuBisCO catalyzes two reactions: the carboxylation of D-ribulose 1,5-bisphosphate, the primary event in carbon dioxide fixation, as well as the oxidative fragmentation of the pentose substrate in the photorespiration process. Both reactions occur simultaneously and in competition at the same active site. The sequence is that of Ribulose bisphosphate carboxylase large chain (rbcL) from Marchantia polymorpha (Common liverwort).